Here is a 1434-residue protein sequence, read N- to C-terminus: Protein patched homolog 1 (1434 aa).

The segment covering 1–13 has biased composition (low complexity); sequence MASAGNAAGALGR. The segment at 1–34 is disordered; it reads MASAGNAAGALGRQAGGGRRRRTGGPHRAAPDRD. Residues 1–86 are Cytoplasmic-facing; sequence MASAGNAAGA…GCYIQKNCGK (86 aa). A helical membrane pass occupies residues 87–107; that stretch reads FLVVGLLIFGAFAVGLKAANL. Over 108–422 the chain is Extracellular; it reads ETNVEELWVE…LDDILKSFSD (315 aa). Asparagine 127, asparagine 298, asparagine 335, and asparagine 400 each carry an N-linked (GlcNAc...) asparagine glycan. Residues 423 to 443 traverse the membrane as a helical segment; that stretch reads VSVIRVASGYLLMLAYACLTM. The 161-residue stretch at 424-584 folds into the SSD domain; the sequence is SVIRVASGYL…LLIFPAILSM (161 aa). Residues 444–458 lie on the Cytoplasmic side of the membrane; sequence LRWDCSKSQGAVGLA. Residues 459–479 traverse the membrane as a helical segment; it reads GVLLVALSVAAGLGLCSLIGI. Over 480-487 the chain is Extracellular; that stretch reads SFNAATTQ. The chain crosses the membrane as a helical span at residues 488 to 508; the sequence is VLPFLALGVGVDDVFLLAHAF. The Cytoplasmic segment spans residues 509 to 533; it reads SETGQNKRIPFEDRTGECLKRTGAS. Residues 534-554 form a helical membrane-spanning segment; the sequence is VALTSISNVTAFFMAALIPIP. At 555-563 the chain is on the extracellular side; sequence ALRAFSLQA. Residues 564-584 form a helical membrane-spanning segment; sequence AVVVVFNFAMVLLIFPAILSM. The Cytoplasmic segment spans residues 585 to 734; sequence DLYRREDRRL…HYAPFLLKPK (150 aa). A helical membrane pass occupies residues 735 to 755; it reads AKVVVILLFLGLLGVSLYGTT. The Extracellular segment spans residues 756-1013; the sequence is RVRDGLDLTD…WEQYISLRHW (258 aa). 2 N-linked (GlcNAc...) asparagine glycosylation sites follow: asparagine 861 and asparagine 986. A helical transmembrane segment spans residues 1014-1034; the sequence is LLLSISVVLACTFLVCAVFLL. The Cytoplasmic segment spans residues 1035 to 1039; the sequence is NPWTA. The chain crosses the membrane as a helical span at residues 1040 to 1060; sequence GIIVMVLALMTVELFGMMGLI. Over 1061–1069 the chain is Extracellular; it reads GIKLSAVPV. A helical membrane pass occupies residues 1070-1090; it reads VILIASVGIGVEFTVHVALAF. Residues 1091 to 1107 lie on the Cytoplasmic side of the membrane; that stretch reads LTAIGDKNHRAMLALEH. A helical transmembrane segment spans residues 1108-1128; it reads MFAPVLDGAVSTLLGVLMLAG. Residues 1129–1140 lie on the Extracellular side of the membrane; the sequence is SEFDFIVRYFFA. Residues 1141 to 1161 traverse the membrane as a helical segment; that stretch reads VLAILTVLGVLNGLVLLPVLL. At 1162–1434 the chain is on the cytoplasmic side; that stretch reads SFFGPCPEVS…EERPWGSSSN (273 aa). Disordered regions lie at residues 1175 to 1219, 1257 to 1348, and 1368 to 1396; these read GLNR…TVSG, HPDS…SSVP, and HPPPGPGRNPRGGPCPGYESYPETDHGVF. Position 1181 is a phosphothreonine (threonine 1181). A Phosphoserine modification is found at serine 1183. Over residues 1204–1213 the composition is skewed to low complexity; the sequence is SDSSDSEYSS. Residues 1288–1297 are compositionally biased toward basic and acidic residues; sequence PRRDPPREGL. Residues 1335 to 1348 are compositionally biased toward polar residues; sequence PRNPTSTAMGSSVP. A Glycyl lysine isopeptide (Lys-Gly) (interchain with G-Cter in ubiquitin) cross-link involves residue lysine 1413.

The protein belongs to the patched family. In terms of assembly, interacts with SNX17. Interacts with IHH. Interacts with G-protein coupled receptor GPR37L1. Post-translationally, glycosylation is necessary for SHH binding. In the absence of Hh ligands, ubiquitination by ITCH at Lys-1413 promotes endocytosis and both proteasomal and lysosomal degradation. Detected in cerebellar Bergmann glia cells (at protein level). In the developing embryo, first detected within the ventral neural tube and later in the somites and limb buds. Expression in the limb buds is restricted to the posterior ectoderm surrounding the zone of polarizing activity. In the adult, expression is seen in brain, lung, liver, kidney and ocular tissues; lower levels in heart, skeletal muscle, and testis.

Its subcellular location is the cell membrane. Functionally, acts as a receptor for sonic hedgehog (SHH), indian hedgehog (IHH) and desert hedgehog (DHH). Associates with the smoothened protein (SMO) to transduce the hedgehog's proteins signal. Seems to have a tumor suppressor function, as inactivation of this protein is probably a necessary, if not sufficient step for tumorigenesis. In Mus musculus (Mouse), this protein is Protein patched homolog 1 (Ptch1).